The primary structure comprises 196 residues: Peptidyl-tRNA hydrolase (196 aa).

Y18 provides a ligand contact to tRNA. The active-site Proton acceptor is the H23. TRNA contacts are provided by F69, N71, and N117.

The protein belongs to the PTH family. In terms of assembly, monomer.

It localises to the cytoplasm. It carries out the reaction an N-acyl-L-alpha-aminoacyl-tRNA + H2O = an N-acyl-L-amino acid + a tRNA + H(+). In terms of biological role, hydrolyzes ribosome-free peptidyl-tRNAs (with 1 or more amino acids incorporated), which drop off the ribosome during protein synthesis, or as a result of ribosome stalling. Its function is as follows. Catalyzes the release of premature peptidyl moieties from peptidyl-tRNA molecules trapped in stalled 50S ribosomal subunits, and thus maintains levels of free tRNAs and 50S ribosomes. The protein is Peptidyl-tRNA hydrolase of Vibrio vulnificus (strain CMCP6).